The following is a 360-amino-acid chain: DNA replication and repair protein RecF (360 aa).

Residue 30–37 (GQNGSGKT) participates in ATP binding.

The protein belongs to the RecF family.

It localises to the cytoplasm. The RecF protein is involved in DNA metabolism; it is required for DNA replication and normal SOS inducibility. RecF binds preferentially to single-stranded, linear DNA. It also seems to bind ATP. In Shewanella sp. (strain MR-4), this protein is DNA replication and repair protein RecF.